We begin with the raw amino-acid sequence, 237 residues long: Uracil-DNA glycosylase (237 aa).

The active-site Proton acceptor is aspartate 77.

This sequence belongs to the uracil-DNA glycosylase (UDG) superfamily. UNG family.

Its subcellular location is the cytoplasm. It carries out the reaction Hydrolyzes single-stranded DNA or mismatched double-stranded DNA and polynucleotides, releasing free uracil.. In terms of biological role, excises uracil residues from the DNA which can arise as a result of misincorporation of dUMP residues by DNA polymerase or due to deamination of cytosine. The protein is Uracil-DNA glycosylase of Acinetobacter baumannii (strain AB307-0294).